A 145-amino-acid polypeptide reads, in one-letter code: D-aminoacyl-tRNA deacylase (145 aa).

The Gly-cisPro motif, important for rejection of L-amino acids signature appears at 137 to 138; the sequence is GP.

It belongs to the DTD family. In terms of assembly, homodimer.

It localises to the cytoplasm. The catalysed reaction is glycyl-tRNA(Ala) + H2O = tRNA(Ala) + glycine + H(+). It carries out the reaction a D-aminoacyl-tRNA + H2O = a tRNA + a D-alpha-amino acid + H(+). Functionally, an aminoacyl-tRNA editing enzyme that deacylates mischarged D-aminoacyl-tRNAs. Also deacylates mischarged glycyl-tRNA(Ala), protecting cells against glycine mischarging by AlaRS. Acts via tRNA-based rather than protein-based catalysis; rejects L-amino acids rather than detecting D-amino acids in the active site. By recycling D-aminoacyl-tRNA to D-amino acids and free tRNA molecules, this enzyme counteracts the toxicity associated with the formation of D-aminoacyl-tRNA entities in vivo and helps enforce protein L-homochirality. In Serratia proteamaculans (strain 568), this protein is D-aminoacyl-tRNA deacylase.